A 248-amino-acid chain; its full sequence is tRNA pseudouridine synthase A 2 (248 aa).

Residue aspartate 55 is the Nucleophile of the active site. Residue tyrosine 113 coordinates substrate.

This sequence belongs to the tRNA pseudouridine synthase TruA family. In terms of assembly, homodimer.

The enzyme catalyses uridine(38/39/40) in tRNA = pseudouridine(38/39/40) in tRNA. Functionally, formation of pseudouridine at positions 38, 39 and 40 in the anticodon stem and loop of transfer RNAs. The polypeptide is tRNA pseudouridine synthase A 2 (Clostridium tetani (strain Massachusetts / E88)).